Reading from the N-terminus, the 700-residue chain is Phenoloxidase 8 (700 aa).

The propeptide occupies 1–51; it reads MATLTQKFHGLLQHPLEPLFLPKNDGTLFYDLPERFLTSRYSPIGQNLANR. Residues asparagine 64 and asparagine 198 are each glycosylated (N-linked (GlcNAc...) asparagine). Cu cation-binding residues include histidine 223, histidine 227, and histidine 252. Asparagine 295 is a glycosylation site (N-linked (GlcNAc...) asparagine). Catalysis depends on glutamate 364, which acts as the Proton acceptor. Positions 379, 383, and 419 each coordinate Cu cation. Asparagine 445, asparagine 507, and asparagine 565 each carry an N-linked (GlcNAc...) asparagine glycan. 2 cysteine pairs are disulfide-bonded: cysteine 592–cysteine 636 and cysteine 594–cysteine 643.

It belongs to the tyrosinase family. As to quaternary structure, homodimer. Requires Cu(2+) as cofactor. Post-translationally, upon activation, a trypsin type protease cleaves prophenol oxidase to yield the active enzyme.

The protein localises to the secreted. It catalyses the reaction 2 tyramine + O2 = 2 dopamine. It carries out the reaction 2 dopamine + O2 = 2 dopamine quinone + 2 H2O. This is a copper-containing oxidase that functions in the formation of pigments such as melanins and other polyphenolic compounds. Catalyzes the oxidation of o-diphenols such as dopamine. Also oxidizes monophenols such as tyramine. The sequence is that of Phenoloxidase 8 from Anopheles gambiae (African malaria mosquito).